A 250-amino-acid polypeptide reads, in one-letter code: NAD(P)H-quinone oxidoreductase subunit K (250 aa).

4 residues coordinate [4Fe-4S] cluster: Cys63, Cys64, Cys128, and Cys159.

This sequence belongs to the complex I 20 kDa subunit family. As to quaternary structure, NDH-1 can be composed of about 15 different subunits; different subcomplexes with different compositions have been identified which probably have different functions. It depends on [4Fe-4S] cluster as a cofactor.

It is found in the cellular thylakoid membrane. It carries out the reaction a plastoquinone + NADH + (n+1) H(+)(in) = a plastoquinol + NAD(+) + n H(+)(out). The catalysed reaction is a plastoquinone + NADPH + (n+1) H(+)(in) = a plastoquinol + NADP(+) + n H(+)(out). In terms of biological role, NDH-1 shuttles electrons from an unknown electron donor, via FMN and iron-sulfur (Fe-S) centers, to quinones in the respiratory and/or the photosynthetic chain. The immediate electron acceptor for the enzyme in this species is believed to be plastoquinone. Couples the redox reaction to proton translocation, and thus conserves the redox energy in a proton gradient. Cyanobacterial NDH-1 also plays a role in inorganic carbon-concentration. The chain is NAD(P)H-quinone oxidoreductase subunit K from Rippkaea orientalis (strain PCC 8801 / RF-1) (Cyanothece sp. (strain PCC 8801)).